We begin with the raw amino-acid sequence, 274 residues long: Large ribosomal subunit protein uL2 (274 aa).

Positions 223–274 (VAMNPVDHPHGGGEGRTSGGRHPVSPWGMPTKGFKTRKNKSTDKYIVRRRNK) are disordered.

This sequence belongs to the universal ribosomal protein uL2 family. Part of the 50S ribosomal subunit. Forms a bridge to the 30S subunit in the 70S ribosome.

In terms of biological role, one of the primary rRNA binding proteins. Required for association of the 30S and 50S subunits to form the 70S ribosome, for tRNA binding and peptide bond formation. It has been suggested to have peptidyltransferase activity; this is somewhat controversial. Makes several contacts with the 16S rRNA in the 70S ribosome. The sequence is that of Large ribosomal subunit protein uL2 from Aliivibrio fischeri (strain ATCC 700601 / ES114) (Vibrio fischeri).